The sequence spans 344 residues: Unsaturated rhamnogalacturonyl hydrolase YesR (344 aa).

Residues 30 to 31 (DW), asparagine 74, and 118 to 128 (QHTVNAAEYVF) contribute to the substrate site. Aspartate 135 acts as the Proton donor in catalysis. Residues 198 to 202 (RANGW) and 308 to 309 (NA) each bind substrate.

Belongs to the glycosyl hydrolase 105 family. As to quaternary structure, monomer.

Its subcellular location is the cytoplasm. The enzyme catalyses 2-O-(4-deoxy-beta-L-threo-hex-4-enopyranuronosyl)-alpha-L-rhamnose + H2O = 5-dehydro-4-deoxy-D-glucuronate + L-rhamnopyranose. In terms of biological role, catalyzes the hydrolysis of unsaturated rhamnogalacturonan disaccharide to yield unsaturated D-galacturonic acid and L-rhamnose. It cannot act on unsaturated glucuronyl hydrolase (UGL) substrates containing unsaturated D-glucuronic acid at the non-reducing terminus, although the active pockets of YesR and UGL are very similar. This is Unsaturated rhamnogalacturonyl hydrolase YesR (yesR) from Bacillus subtilis (strain 168).